A 443-amino-acid chain; its full sequence is Glutamyl-tRNA reductase (443 aa).

Substrate-binding positions include 49-52, serine 109, 114-116, and glutamine 120; these read TCNR and ETQ. The active-site Nucleophile is the cysteine 50. 189 to 194 provides a ligand contact to NADP(+); the sequence is GAGEMS.

This sequence belongs to the glutamyl-tRNA reductase family. In terms of assembly, homodimer.

The enzyme catalyses (S)-4-amino-5-oxopentanoate + tRNA(Glu) + NADP(+) = L-glutamyl-tRNA(Glu) + NADPH + H(+). It functions in the pathway porphyrin-containing compound metabolism; protoporphyrin-IX biosynthesis; 5-aminolevulinate from L-glutamyl-tRNA(Glu): step 1/2. Functionally, catalyzes the NADPH-dependent reduction of glutamyl-tRNA(Glu) to glutamate 1-semialdehyde (GSA). The polypeptide is Glutamyl-tRNA reductase (Desulfitobacterium hafniense (strain DSM 10664 / DCB-2)).